Here is a 218-residue protein sequence, read N- to C-terminus: Thiopurine S-methyltransferase (218 aa).

Positions 10, 45, 66, and 123 each coordinate S-adenosyl-L-methionine.

It belongs to the class I-like SAM-binding methyltransferase superfamily. TPMT family.

The protein resides in the cytoplasm. It catalyses the reaction S-adenosyl-L-methionine + a thiopurine = S-adenosyl-L-homocysteine + a thiopurine S-methylether.. This is Thiopurine S-methyltransferase from Shewanella denitrificans (strain OS217 / ATCC BAA-1090 / DSM 15013).